Consider the following 110-residue polypeptide: Ribonuclease P protein component (110 aa).

The protein belongs to the RnpA family. Consists of a catalytic RNA component (M1 or rnpB) and a protein subunit.

It catalyses the reaction Endonucleolytic cleavage of RNA, removing 5'-extranucleotides from tRNA precursor.. Its function is as follows. RNaseP catalyzes the removal of the 5'-leader sequence from pre-tRNA to produce the mature 5'-terminus. It can also cleave other RNA substrates such as 4.5S RNA. The protein component plays an auxiliary but essential role in vivo by binding to the 5'-leader sequence and broadening the substrate specificity of the ribozyme. This Mesorhizobium japonicum (strain LMG 29417 / CECT 9101 / MAFF 303099) (Mesorhizobium loti (strain MAFF 303099)) protein is Ribonuclease P protein component.